Consider the following 3856-residue polypeptide: Serine/threonine-protein kinase ATM (3856 aa).

The region spanning 108–162 (VGNLVWVMTKYKKWWPGEVVDFKADAKESFMVRSIGQSHLVSWFASSKLKPFKES) is the PWWP domain. Positions 648 to 681 (GIPDLNGTNTEPTLVLPQVEPTQRRRRRKKEESP) are disordered. The FAT domain occupies 2727–3393 (VVAGSAVVCG…ILQLLALANG (667 aa)). The Bipartite nuclear localization signal motif lies at 3233-3249 (RKHKTKELEVFIKRFKS). The region spanning 3499–3811 (LSDSVTVMNG…GNKDATRALM (313 aa)) is the PI3K/PI4K catalytic domain. The segment at 3505 to 3511 (VMNGINA) is G-loop. Residues 3678-3686 (GLGDRHAMN) are catalytic loop. The activation loop stretch occupies residues 3698–3722 (HIDLGVAFEQGLMLKTPERVPFRLT). The FATC domain occupies 3824-3856 (EMRSIHGQAQQLIQDAIDTDRLSHMFPGWGAWM).

This sequence belongs to the PI3/PI4-kinase family. As to quaternary structure, interacts with RUG3. In terms of tissue distribution, ubiquitously expressed at low levels with slightly higher levels in flower buds.

The protein resides in the nucleus. The catalysed reaction is L-seryl-[protein] + ATP = O-phospho-L-seryl-[protein] + ADP + H(+). It carries out the reaction L-threonyl-[protein] + ATP = O-phospho-L-threonyl-[protein] + ADP + H(+). Functionally, serine/threonine protein kinase which activates checkpoint signaling upon genotoxic stresses such as ionizing radiation (IR) or DNA replication stalling. Plays a central role in the perception and response to both stress-induced damage in somatic cells and developmentally programmed DNA damage during meiosis. Recognizes the substrate consensus sequence [ST]-Q. Phosphorylates histone variant H2AX to form H2AXS139ph at double strand breaks (DSBs), thereby regulating DNA damage response mechanism. Involved in transcriptional regulation of RAD51, PARP1, GR1, and LIG4 in response to DNA double strand breaks. Plays a dual role by activating the DNA damage response at dysfunctional telomeres and yet preventing this activation at functional telomeres. Not required for telomere length homeostasis. Regulates DNA damage response (DDR) synergistically with RUG3. Together with RUG3, involved in the splicing of the ND2/NAD2 mRNA. In Arabidopsis thaliana (Mouse-ear cress), this protein is Serine/threonine-protein kinase ATM.